Consider the following 271-residue polypeptide: Putative phosphoenolpyruvate synthase regulatory protein (271 aa).

151-158 (GVSRSGKT) serves as a coordination point for ADP.

The protein belongs to the pyruvate, phosphate/water dikinase regulatory protein family. PSRP subfamily.

It catalyses the reaction [pyruvate, water dikinase] + ADP = [pyruvate, water dikinase]-phosphate + AMP + H(+). The enzyme catalyses [pyruvate, water dikinase]-phosphate + phosphate + H(+) = [pyruvate, water dikinase] + diphosphate. In terms of biological role, bifunctional serine/threonine kinase and phosphorylase involved in the regulation of the phosphoenolpyruvate synthase (PEPS) by catalyzing its phosphorylation/dephosphorylation. The chain is Putative phosphoenolpyruvate synthase regulatory protein from Burkholderia lata (strain ATCC 17760 / DSM 23089 / LMG 22485 / NCIMB 9086 / R18194 / 383).